The chain runs to 286 residues: Bifunctional protein FolD (286 aa).

Residues 166 to 168 and serine 191 each bind NADP(+); that span reads GRS.

Belongs to the tetrahydrofolate dehydrogenase/cyclohydrolase family. In terms of assembly, homodimer.

It catalyses the reaction (6R)-5,10-methylene-5,6,7,8-tetrahydrofolate + NADP(+) = (6R)-5,10-methenyltetrahydrofolate + NADPH. The catalysed reaction is (6R)-5,10-methenyltetrahydrofolate + H2O = (6R)-10-formyltetrahydrofolate + H(+). It functions in the pathway one-carbon metabolism; tetrahydrofolate interconversion. In terms of biological role, catalyzes the oxidation of 5,10-methylenetetrahydrofolate to 5,10-methenyltetrahydrofolate and then the hydrolysis of 5,10-methenyltetrahydrofolate to 10-formyltetrahydrofolate. This Lactiplantibacillus plantarum (strain ATCC BAA-793 / NCIMB 8826 / WCFS1) (Lactobacillus plantarum) protein is Bifunctional protein FolD.